Reading from the N-terminus, the 336-residue chain is Large ribosomal subunit protein uL3 (336 aa).

Disordered regions lie at residues 1-43 (MPQP…QGFA), 205-230 (ITKGKGTQGPVKRWGVQKRKGKHARQ), and 311-336 (RPAVRPGDQPRLDPEVRYVSTASNQG). Residues 219 to 230 (GVQKRKGKHARQ) are compositionally biased toward basic residues.

This sequence belongs to the universal ribosomal protein uL3 family. In terms of assembly, part of the 50S ribosomal subunit. Forms a cluster with proteins L14 and L24e.

Functionally, one of the primary rRNA binding proteins, it binds directly near the 3'-end of the 23S rRNA, where it nucleates assembly of the 50S subunit. The sequence is that of Large ribosomal subunit protein uL3 from Natronomonas pharaonis (strain ATCC 35678 / DSM 2160 / CIP 103997 / JCM 8858 / NBRC 14720 / NCIMB 2260 / Gabara) (Halobacterium pharaonis).